Reading from the N-terminus, the 94-residue chain is Co-chaperonin GroES (94 aa).

This sequence belongs to the GroES chaperonin family. Heptamer of 7 subunits arranged in a ring. Interacts with the chaperonin GroEL.

It localises to the cytoplasm. Together with the chaperonin GroEL, plays an essential role in assisting protein folding. The GroEL-GroES system forms a nano-cage that allows encapsulation of the non-native substrate proteins and provides a physical environment optimized to promote and accelerate protein folding. GroES binds to the apical surface of the GroEL ring, thereby capping the opening of the GroEL channel. This is Co-chaperonin GroES from Streptococcus equinus (Streptococcus bovis).